The primary structure comprises 1403 residues: DNA-directed RNA polymerase subunit beta' (1403 aa).

Residues C70, C72, C85, and C88 each coordinate Zn(2+). Mg(2+)-binding residues include D460, D462, and D464. Zn(2+)-binding residues include C814, C888, C895, and C898. Residues 1369 to 1403 form a disordered region; that stretch reads RRKRRMLEQPESLTADTGTSHYGEDEISESGAATA. The span at 1379–1388 shows a compositional bias: polar residues; it reads ESLTADTGTS.

It belongs to the RNA polymerase beta' chain family. As to quaternary structure, the RNAP catalytic core consists of 2 alpha, 1 beta, 1 beta' and 1 omega subunit. When a sigma factor is associated with the core the holoenzyme is formed, which can initiate transcription. It depends on Mg(2+) as a cofactor. The cofactor is Zn(2+).

The enzyme catalyses RNA(n) + a ribonucleoside 5'-triphosphate = RNA(n+1) + diphosphate. DNA-dependent RNA polymerase catalyzes the transcription of DNA into RNA using the four ribonucleoside triphosphates as substrates. This is DNA-directed RNA polymerase subunit beta' from Nitrosococcus oceani (strain ATCC 19707 / BCRC 17464 / JCM 30415 / NCIMB 11848 / C-107).